Consider the following 858-residue polypeptide: Heat shock protein 105 kDa (858 aa).

Ser-2 is modified (N-acetylserine). Residue Lys-471 is modified to N6-acetyllysine. Disordered stretches follow at residues 500–584 (KVPT…PPEA) and 796–858 (CEPV…MDLD). Residues 504-514 (EENEMSSEADM) show a composition bias toward acidic residues. Residues Ser-509 and Ser-510 each carry the phosphoserine modification. Positions 532–554 (QQDNSEAGTQPQVQTDAQQTSQS) are enriched in polar residues. A Phosphoserine modification is found at Ser-557. Thr-561 carries the phosphothreonine modification. 2 stretches are compositionally biased toward basic and acidic residues: residues 563–584 (EENKIPDADKANEKKVDQPPEA) and 805–814 (PKIESPKLER). Ser-809 is subject to Phosphoserine. Phosphothreonine is present on Thr-815. The segment covering 821 to 832 (IDKKEEDLEDKN) has biased composition (basic and acidic residues). Positions 849 to 858 (EKNSVNMDLD) are enriched in polar residues.

The protein belongs to the heat shock protein 70 family. In terms of assembly, interacts with HSPA8/HSC70. Interacts with HSPA1A (via NBD) and HSPA1B (via NBD). Post-translationally, phosphorylation on Ser-509 may be important for regulation of the HSPA8/HSC70 chaperone activity.

The protein localises to the cytoplasm. Its function is as follows. Acts as a nucleotide-exchange factor (NEF) for chaperone proteins HSPA1A and HSPA1B, promoting the release of ADP from HSPA1A/B thereby triggering substrate release. Prevents the aggregation of denatured proteins in cells under severe stress, on which the ATP levels decrease markedly. Inhibits HSPA8/HSC70 ATPase and chaperone activities. The polypeptide is Heat shock protein 105 kDa (HSPH1) (Pongo abelii (Sumatran orangutan)).